Reading from the N-terminus, the 199-residue chain is Twist-related protein (199 aa).

Positions 1 to 43 (MQEHQLSRVTSGNKKKYQSFDDESRDEKRMKCDSTDKLESNSN) are disordered. Basic and acidic residues predominate over residues 25–39 (RDEKRMKCDSTDKLE). The region spanning 51–102 (THRVIANIRERQRTQALNQSFSTLRKIIPTLPSDKLSKIQTLRLAAMYIDFL) is the bHLH domain.

Efficient DNA binding requires dimerization with another bHLH protein. Homodimer. As to expression, expression is seen at the point of medusa formation in the ectodermal and endodermal bud tissues, and in the entocodon which gives rise to all smooth and striated muscle cells. After the subumbrellar plate differentiates from the endoderm, strong expression is detected until the medusa detaches from the gonzoid. Expression is observed in the distal part of the medusa but diminishes in entocodon-derived muscles as the tissues differentiate, with expression disappearing completely after stage 8. In later stages expression is seen in the distal and proximal parts of the bud and depending on state of maturity, in the developing gonadal tissue.

The protein resides in the nucleus. In terms of biological role, probable transcription factor, which may be responsible for the formation of myoepithelial cells in early muscle development in larva and the formation of non-muscle tissues in later bud stages and mesoderm-like structures in the medusa. The chain is Twist-related protein from Podocoryna carnea (Hydrozoan).